The chain runs to 904 residues: Protein translocase subunit SecA (904 aa).

ATP contacts are provided by residues glutamine 89, 107-111 (GEGKT), and aspartate 496. Positions 870-904 (GGFQELSSGTPSPTVTVTTSSGGGTERKTSRRRKR) are disordered. Residues 876–889 (SSGTPSPTVTVTTS) are compositionally biased toward low complexity.

It belongs to the SecA family. As to quaternary structure, monomer and homodimer. Part of the essential Sec protein translocation apparatus which comprises SecA, SecYEG and auxiliary proteins SecDF. Other proteins may also be involved.

It is found in the cell inner membrane. The protein localises to the cytoplasm. It carries out the reaction ATP + H2O + cellular proteinSide 1 = ADP + phosphate + cellular proteinSide 2.. Its function is as follows. Part of the Sec protein translocase complex. Interacts with the SecYEG preprotein conducting channel. Has a central role in coupling the hydrolysis of ATP to the transfer of proteins into and across the cell membrane, serving as an ATP-driven molecular motor driving the stepwise translocation of polypeptide chains across the membrane. This chain is Protein translocase subunit SecA, found in Leptospira borgpetersenii serovar Hardjo-bovis (strain JB197).